The primary structure comprises 533 residues: Calcium-dependent protein kinase 8 (533 aa).

The segment at 1 to 21 is disordered; the sequence is MGNCCASPGSETGSKKGKPKI. Gly2 carries N-myristoyl glycine lipidation. One can recognise a Protein kinase domain in the interval 57–315; the sequence is YDLGREVGRG…AAQVLEHSWI (259 aa). ATP is bound by residues 63–71 and Lys86; that span reads VGRGEFGIT. The active-site Proton acceptor is Asp181. The residue at position 221 (Ser221) is a Phosphoserine. Residues 321-351 are autoinhibitory domain; it reads APNVSLGETVKARLKQFSVMNKLKKRALRVI. 4 EF-hand domains span residues 358-394, 395-430, 431-466, and 467-502; these read EEVA…GQQQ, IPDT…LKKM, ANDE…EVDT, and NSEE…GTDW. Residues Asp371, Thr375, Lys377, Glu382, Asp408, Asp410, Asp412, Thr414, Glu419, Asp444, Asn446, Ser448, Tyr450, Glu455, Asp480, Asp482, Asp484, and Arg486 each contribute to the Ca(2+) site. Ser488 is modified (phosphoserine). Residue Glu491 coordinates Ca(2+). Phosphoserine is present on Ser526.

Belongs to the protein kinase superfamily. Ser/Thr protein kinase family. CDPK subfamily.

It localises to the cell membrane. It catalyses the reaction L-seryl-[protein] + ATP = O-phospho-L-seryl-[protein] + ADP + H(+). The enzyme catalyses L-threonyl-[protein] + ATP = O-phospho-L-threonyl-[protein] + ADP + H(+). With respect to regulation, activated by calcium. Autophosphorylation may play an important role in the regulation of the kinase activity. Its function is as follows. May play a role in signal transduction pathways that involve calcium as a second messenger. This chain is Calcium-dependent protein kinase 8 (CPK8), found in Arabidopsis thaliana (Mouse-ear cress).